Here is a 22-residue protein sequence, read N- to C-terminus: Mu-conotoxin GIIIB (22 aa).

Cystine bridges form between cysteine 3/cysteine 15, cysteine 4/cysteine 20, and cysteine 10/cysteine 21. A 4-hydroxyproline; partial mark is found at proline 6 and proline 7. Proline 17 carries the 4-hydroxyproline modification. At alanine 22 the chain carries Alanine amide.

The protein belongs to the conotoxin M superfamily. As to expression, expressed by the venom duct.

Its subcellular location is the secreted. Its function is as follows. Mu-conotoxins block voltage-gated sodium channels (Nav). This chain is Mu-conotoxin GIIIB, found in Conus geographus (Geography cone).